A 225-amino-acid polypeptide reads, in one-letter code: Redox-sensing transcriptional repressor Rex (225 aa).

A DNA-binding region (H-T-H motif) is located at residues 16–55 (IYYRYLNILLDADKKRVSSTELSEAVKVDSATIRRDFSYF). Position 90–95 (90–95 (GVGNLG)) interacts with NAD(+).

The protein belongs to the transcriptional regulatory Rex family. As to quaternary structure, homodimer.

The protein resides in the cytoplasm. In terms of biological role, modulates transcription in response to changes in cellular NADH/NAD(+) redox state. In Lactiplantibacillus plantarum (strain ATCC BAA-793 / NCIMB 8826 / WCFS1) (Lactobacillus plantarum), this protein is Redox-sensing transcriptional repressor Rex.